A 155-amino-acid chain; its full sequence is MGKRFGYSFQNFDPERMARASGRDLRISPKLAVEVCRELRGMMLNDALRYLDEVIALKRPVPLRRYNDSQGHKPGKGFGPGRYPVKVAKAIKKVLLNAKNNAEQKGLDPDKLKIIHIAAHRGPVLRGWYPRAFGRATPFNEQTTHIEVVVEEIRR.

It belongs to the universal ribosomal protein uL22 family. In terms of assembly, part of the 50S ribosomal subunit.

Its function is as follows. This protein binds specifically to 23S rRNA. It makes multiple contacts with different domains of the 23S rRNA in the assembled 50S subunit and ribosome. The globular domain of the protein is located near the polypeptide exit tunnel on the outside of the subunit, while an extended beta-hairpin is found that lines the wall of the exit tunnel in the center of the 70S ribosome. This chain is Large ribosomal subunit protein uL22, found in Pyrococcus horikoshii (strain ATCC 700860 / DSM 12428 / JCM 9974 / NBRC 100139 / OT-3).